Reading from the N-terminus, the 341-residue chain is MFYKIAQKVMFQMDPEKAHNLAIGSLKSTANSPLNCFYAQKLQAAPVEFMGLTFPNPVGLAAGMDKDGECIDAFHAMGFGHVEVGTVTPRPQPGNDQPRLFRLKPAKAIINRMGFNNKGVDNLVANLKAAKSGAMVGVNIGKNKDTPVEQGKEDYLICMEKVYPYAAYIAVNISSPNTPGLRSLQYGDLLDDLLGSLKAKQKDLAERHGKYVPIALKIAPDLEPDEIEKIAESLIRNEFDGAIATNTTLTRDGVSGLVNSNEAGGLSGKPLNSLSTKVIKQLADCLKGQVPIIGVGGINSAADALDKLDAGATMVQIYSGFIYRGPELIKEIVDAYRVKSK.

FMN contacts are provided by residues 62 to 66 (AGMDK) and Thr-86. Residue Lys-66 coordinates substrate. 111 to 115 (NRMGF) lines the substrate pocket. Residues Asn-139 and Asn-172 each coordinate FMN. Position 172 (Asn-172) interacts with substrate. Ser-175 serves as the catalytic Nucleophile. Asn-177 provides a ligand contact to substrate. FMN-binding residues include Lys-217 and Thr-245. Residue 246-247 (NT) participates in substrate binding. FMN-binding positions include Gly-268, Gly-297, and 318–319 (YS).

The protein belongs to the dihydroorotate dehydrogenase family. Type 2 subfamily. In terms of assembly, monomer. It depends on FMN as a cofactor.

Its subcellular location is the cell membrane. It carries out the reaction (S)-dihydroorotate + a quinone = orotate + a quinol. The protein operates within pyrimidine metabolism; UMP biosynthesis via de novo pathway; orotate from (S)-dihydroorotate (quinone route): step 1/1. Catalyzes the conversion of dihydroorotate to orotate with quinone as electron acceptor. The polypeptide is Dihydroorotate dehydrogenase (quinone) (Shewanella loihica (strain ATCC BAA-1088 / PV-4)).